We begin with the raw amino-acid sequence, 165 residues long: AIG2-like protein A (165 aa).

15–20 (YGSFQD) is a substrate binding site. The Proton acceptor role is filled by Glu83.

It belongs to the gamma-glutamylcyclotransferase family. As to expression, expressed only in seeds.

Putative gamma-glutamylcyclotransferase. This is AIG2-like protein A from Arabidopsis thaliana (Mouse-ear cress).